The following is a 516-amino-acid chain: UvrABC system protein C (516 aa).

One can recognise a GIY-YIG domain in the interval His9–Ile87. The UVR domain maps to Gly191–Leu226.

Belongs to the UvrC family. In terms of assembly, interacts with UvrB in an incision complex.

The protein resides in the cytoplasm. In terms of biological role, the UvrABC repair system catalyzes the recognition and processing of DNA lesions. UvrC both incises the 5' and 3' sides of the lesion. The N-terminal half is responsible for the 3' incision and the C-terminal half is responsible for the 5' incision. The chain is UvrABC system protein C from Methanosarcina acetivorans (strain ATCC 35395 / DSM 2834 / JCM 12185 / C2A).